The following is a 351-amino-acid chain: Protein pelota homolog (351 aa).

Belongs to the eukaryotic release factor 1 family. Pelota subfamily. As to quaternary structure, monomer. Requires a divalent metal cation as cofactor.

The protein localises to the cytoplasm. In terms of biological role, may function in recognizing stalled ribosomes, interact with stem-loop structures in stalled mRNA molecules, and effect endonucleolytic cleavage of the mRNA. May play a role in the release non-functional ribosomes and degradation of damaged mRNAs. Has endoribonuclease activity. The protein is Protein pelota homolog of Methanosphaera stadtmanae (strain ATCC 43021 / DSM 3091 / JCM 11832 / MCB-3).